Reading from the N-terminus, the 538-residue chain is Nectin-2 (538 aa).

Positions 1–31 (MARAAALLPSRSPPTPLLWPLLLLLLLETGA) are cleaved as a signal peptide. The Ig-like V-type domain maps to 32–156 (QDVRVQVLPE…KGSVRGMTWL (125 aa)). At 32-360 (QDVRVQVLPE…NTAGAGATGG (329 aa)) the chain is on the extracellular side. Disulfide bonds link cysteine 54–cysteine 140, cysteine 183–cysteine 238, and cysteine 283–cysteine 329. Residue asparagine 137 is glycosylated (N-linked (GlcNAc...) asparagine). 2 consecutive Ig-like C2-type domains span residues 162-256 (PKNQ…VTLS) and 261-345 (PEVS…QVIF). Residue asparagine 324 is glycosylated (N-linked (GlcNAc...) asparagine). The chain crosses the membrane as a helical span at residues 361–381 (IIGGIIAAIIATAVAATGILI). Residues 382-538 (CRQQRKEQTL…GFVMSRAMYV (157 aa)) lie on the Cytoplasmic side of the membrane. Residues 390–414 (TLQGAEEDEDLEGPPSYKPPTPKAK) are disordered. The residue at position 410 (threonine 410) is a Phosphothreonine. A phosphoserine mark is found at serine 433, glycine 465, and glycine 470. Positions 462–489 (ERSGPLHPGATSLGSPIPVPPGPPAVED) are disordered.

Belongs to the nectin family. Can form trans-heterodimers with NECTIN3. Interacts with CD226 or with PVRIG; these interactions are competitive and have a differential functional outcome on T-cell activation, either positive or negative, respectively. Binds with low affinity to TIGIT. In terms of assembly, (Microbial infection) Interacts with herpes simplex virus 1 (HHV-1) mutant Rid1, herpes simplex virus 1 (HHV-2) and pseudorabies virus (PRV) envelope glycoprotein D. In terms of tissue distribution, ubiquitous.

It localises to the cell membrane. Its function is as follows. Modulator of T-cell signaling. Can be either a costimulator of T-cell function, or a coinhibitor, depending on the receptor it binds to. Upon binding to CD226, stimulates T-cell proliferation and cytokine production, including that of IL2, IL5, IL10, IL13, and IFNG. Upon interaction with PVRIG, inhibits T-cell proliferation. These interactions are competitive. Probable cell adhesion protein. In terms of biological role, (Microbial infection) Acts as a receptor for herpes simplex virus 1 (HHV-1) mutant Rid1, herpes simplex virus 1 (HHV-2) and pseudorabies virus (PRV). The polypeptide is Nectin-2 (Homo sapiens (Human)).